The primary structure comprises 1077 residues: Receptor-type guanylate cyclase daf-11 (1077 aa).

N-linked (GlcNAc...) asparagine glycosylation is found at Asn-14, Asn-112, Asn-149, and Asn-311. Residues 335 to 355 (TGVIIAIAVIMGVLLMFIIIL) form a helical membrane-spanning segment. The region spanning 355 to 695 (LTTIRKCCNG…LARKIIDTVL (341 aa)) is the Protein kinase domain. Over 356–1077 (TTIRKCCNGS…DSQASTIPDN (722 aa)) the chain is Cytoplasmic. One can recognise a Guanylate cyclase domain in the interval 765 to 895 (TILYSDIVGF…EAVILASKME (131 aa)). Residues Asp-770, Ile-771, and Asp-814 each contribute to the Mg(2+) site. Positions 983–1034 (KDKMTLAKEKVIAERKNEEERLQRQQTLQEALEEHEEEIEMNEVLVDEDEGE) form a coiled coil. The disordered stretch occupies residues 1048–1077 (TQMEELEDEPAGRTIGHGRLDSQASTIPDN).

The protein belongs to the adenylyl cyclase class-4/guanylyl cyclase family. Expressed in sensory neurons including ASI, ASJ, ASK, AWB and AWC. Expressed in ASJ neurons in the dauer stage.

It localises to the cell membrane. The protein localises to the cell projection. Its subcellular location is the dendrite. The protein resides in the cilium. It is found in the perikaryon. The enzyme catalyses GTP = 3',5'-cyclic GMP + diphosphate. In terms of biological role, guanylate cyclase involved in the production of the second messenger cGMP. In addition, regulates cGMP levels by controlling the transcription of 3',5'-cyclic phosphodiesterase pde-1 and pde-5 mRNAs. Involved in the olfactory, light and pheromone sensing pathways. Part of the chemosensory mechanism of the ASJ sensory neuron that controls dauer formation and dauer recovery. Promotes the calcium flux in ASJ sensory neurons in response to onset and removal of a nitric oxide (NO) stimulus and is thereby required for the behavioral avoidance response to NO-producing organisms like P.aeruginosa. In ASI and ASJ sensory neurons, controls dauer formation and behavioral response to P.aeruginosa by up-regulating the transcription of daf-7, a member of the TGF-beta family. Required for the chemotaxis responses to non-volatile and volatile attractants mediated by the sensory neurons ASE and AWC respectively. Required in ASJ neurons for phototransduction downstream of G protein coupled-photoreceptor lite-1. Plays a role in the development of ASJ sensory neuron axons during late larval stages and in the maintenance of normal axon morphology in adults. Required to maintain the expression of putative olfactory receptor str-2 in one of the two AWC neurons in adults. Regulates, via the production of cGMP, lifespan (in some environmental conditions), sensitivity to oxidative stress and entry into quiescence triggered by satiety. In AWB and AWC sensory neurons, mediates the recognition of food odors which subsequently allows for the detection of preferred food sources. This Caenorhabditis elegans protein is Receptor-type guanylate cyclase daf-11.